The primary structure comprises 303 residues: Putative band 7 family protein R614 (303 aa).

Belongs to the band 7/mec-2 family.

The protein is Putative band 7 family protein R614 of Acanthamoeba polyphaga (Amoeba).